The chain runs to 1241 residues: uncharacterized protein (1241 aa).

Positions 21 to 49 (ILNDNVREINIAKKEIKQLREYVGILQQN) form a coiled coil. The next 3 helical transmembrane spans lie at 261–281 (VNAI…FVLG), 918–938 (AVVG…GLVA), and 947–967 (GHIV…VIGG). The disordered stretch occupies residues 1005–1028 (THIGKEDSNNGVSTSTNKRSIGKA). Residues 1013-1028 (NNGVSTSTNKRSIGKA) show a composition bias toward polar residues.

The protein resides in the host membrane. This is an uncharacterized protein from Diadromus pulchellus (Parasitic wasp).